The sequence spans 41 residues: Large ribosomal subunit protein bL36B (41 aa).

This sequence belongs to the bacterial ribosomal protein bL36 family.

The protein is Large ribosomal subunit protein bL36B of Neisseria meningitidis serogroup C (strain 053442).